Here is a 758-residue protein sequence, read N- to C-terminus: Vitamin K-dependent gamma-carboxylase (758 aa).

The disordered stretch occupies residues M1–A22. At A2 the chain carries N-acetylalanine. At A2–D60 the chain is on the cytoplasmic side. A helical membrane pass occupies residues P61–Q81. Topologically, residues E82 to D113 are lumenal. C99 and C450 form a disulfide bridge. The chain crosses the membrane as a helical span at residues W114–C134. The Cytoplasmic portion of the chain corresponds to Y135–R136. Residues I137–W157 traverse the membrane as a helical segment. Residues N158 to Q292 are Lumenal-facing. K218 serves as the catalytic Proton acceptor. A helical transmembrane segment spans residues L293–P313. The Cytoplasmic segment spans residues E314 to Q361. A helical transmembrane segment spans residues L362–F382. Over L383 to F758 the chain is Lumenal. N-linked (GlcNAc...) asparagine glycosylation is found at N459 and N550. Positions G732–F758 are disordered. Over residues N735–P747 the composition is skewed to polar residues.

This sequence belongs to the vitamin K-dependent gamma-carboxylase family. Monomer. May interact with CALU.

It localises to the endoplasmic reticulum membrane. The enzyme catalyses 4-carboxy-L-glutamyl-[protein] + 2,3-epoxyphylloquinone + H2O + H(+) = phylloquinol + L-glutamyl-[protein] + CO2 + O2. In terms of biological role, mediates the vitamin K-dependent carboxylation of glutamate residues to calcium-binding gamma-carboxyglutamate (Gla) residues with the concomitant conversion of the reduced hydroquinone form of vitamin K to vitamin K epoxide. Catalyzes gamma-carboxylation of various proteins, such as blood coagulation factors (F2, F7, F9 and F10), osteocalcin (BGLAP) or matrix Gla protein (MGP). This Homo sapiens (Human) protein is Vitamin K-dependent gamma-carboxylase (GGCX).